The primary structure comprises 189 residues: Large ribosomal subunit protein uL6 (189 aa).

The protein belongs to the universal ribosomal protein uL6 family. Part of the 50S ribosomal subunit.

This protein binds to the 23S rRNA, and is important in its secondary structure. It is located near the subunit interface in the base of the L7/L12 stalk, and near the tRNA binding site of the peptidyltransferase center. In Microcystis aeruginosa (strain NIES-843 / IAM M-2473), this protein is Large ribosomal subunit protein uL6.